Here is a 453-residue protein sequence, read N- to C-terminus: SH2 domain-containing protein 4A (453 aa).

A coiled-coil region spans residues 96–127 (EIIAEQARREAEKEAEQLRKKQEVELSQLSTL). The segment at 280-301 (AVKRPPIPPKPKLPPSANNSSI) is disordered. Positions 284–293 (PPIPPKPKLP) are enriched in pro residues. The region spanning 347 to 439 (WFHGIISRQE…LGRELLRFPC (93 aa)) is the SH2 domain.

The protein resides in the cytoplasm. Inhibits estrogen-induced cell proliferation. In Xenopus tropicalis (Western clawed frog), this protein is SH2 domain-containing protein 4A (sh2d4a).